Here is a 300-residue protein sequence, read N- to C-terminus: Cation-efflux pump FieF (300 aa).

The chain crosses the membrane as a helical span at residues 24–44 (LLIKIFAWWYTGSVSILAALV). The Zn(2+) site is built by aspartate 45 and aspartate 49. The next 2 membrane-spanning stretches (helical) occupy residues 82–102 (AALA…LTSI) and 114–134 (PGVG…LVTF). Zn(2+)-binding residues include histidine 153 and aspartate 157. The next 2 helical transmembrane spans lie at 156-176 (SDVM…YGWH) and 178-198 (ADAL…LRMG).

Belongs to the cation diffusion facilitator (CDF) transporter (TC 2.A.4) family. FieF subfamily. In terms of assembly, homodimer.

The protein localises to the cell inner membrane. It carries out the reaction Zn(2+)(in) + H(+)(out) = Zn(2+)(out) + H(+)(in). It catalyses the reaction Cd(2+)(in) + H(+)(out) = Cd(2+)(out) + H(+)(in). The enzyme catalyses Fe(2+)(in) + H(+)(out) = Fe(2+)(out) + H(+)(in). Its function is as follows. Divalent metal cation transporter which exports Zn(2+), Cd(2+) and possibly Fe(2+). May be involved in zinc and iron detoxification by efflux. In Salmonella choleraesuis (strain SC-B67), this protein is Cation-efflux pump FieF.